The sequence spans 282 residues: Bis(5'-nucleosyl)-tetraphosphatase, symmetrical (282 aa).

The protein belongs to the Ap4A hydrolase family.

The enzyme catalyses P(1),P(4)-bis(5'-adenosyl) tetraphosphate + H2O = 2 ADP + 2 H(+). In terms of biological role, hydrolyzes diadenosine 5',5'''-P1,P4-tetraphosphate to yield ADP. The sequence is that of Bis(5'-nucleosyl)-tetraphosphatase, symmetrical from Burkholderia mallei (strain NCTC 10247).